The following is a 392-amino-acid chain: Glucan endo-1,3-beta-glucosidase 14 (392 aa).

The signal sequence occupies residues 1-21 (MATHSLSFFFRVLLLLFLTLS). Residues asparagine 54 and asparagine 89 are each glycosylated (N-linked (GlcNAc...) asparagine). Glutamate 122 (proton donor) is an active-site residue. Glutamate 267 acts as the Nucleophile in catalysis. Residue serine 359 is the site of GPI-anchor amidated serine attachment. The propeptide at 360–392 (RATTIKILNLWRVVMGLAVAWFILDMGDKMRMR) is removed in mature form.

It belongs to the glycosyl hydrolase 17 family.

It is found in the cell membrane. The protein resides in the secreted. It localises to the cell wall. Its subcellular location is the cytoplasm. It carries out the reaction Hydrolysis of (1-&gt;3)-beta-D-glucosidic linkages in (1-&gt;3)-beta-D-glucans.. The protein is Glucan endo-1,3-beta-glucosidase 14 of Arabidopsis thaliana (Mouse-ear cress).